Reading from the N-terminus, the 327-residue chain is Tetraacyldisaccharide 4'-kinase (327 aa).

Residue 52–59 (TAGGAGKT) coordinates ATP.

Belongs to the LpxK family.

It carries out the reaction a lipid A disaccharide + ATP = a lipid IVA + ADP + H(+). The protein operates within glycolipid biosynthesis; lipid IV(A) biosynthesis; lipid IV(A) from (3R)-3-hydroxytetradecanoyl-[acyl-carrier-protein] and UDP-N-acetyl-alpha-D-glucosamine: step 6/6. Functionally, transfers the gamma-phosphate of ATP to the 4'-position of a tetraacyldisaccharide 1-phosphate intermediate (termed DS-1-P) to form tetraacyldisaccharide 1,4'-bis-phosphate (lipid IVA). This is Tetraacyldisaccharide 4'-kinase from Gluconacetobacter diazotrophicus (strain ATCC 49037 / DSM 5601 / CCUG 37298 / CIP 103539 / LMG 7603 / PAl5).